The chain runs to 318 residues: TPR repeat-containing protein MJ0940 (318 aa).

TPR repeat units lie at residues 17-50, 84-117, 119-151, 152-185, 186-219, 221-254, 255-288, and 289-318; these read SLTYLIKSYEYRDRGNLLESLYYLDKALELNPDF, PVAYALLGQLYELLGNFDNALECYEKSLGIEEKF, TAFFLKVLCLGLSGKYDELLKCCDRLISFAPNF, IPAYIIKANMLRKLGRYEEALACVNKVLELKEND, TNAIYLKALILNRIGNCDEALKYYEKLIDELNVT, IEVIREAIYLSFLFNKLDKAEKYIEMGLKLRPDD, ASLWYFKGKLYEKQNKFEEALKYYNKAIQLMPHH, and TKALLAKARVLEKLGRIEESIECYNKALDR.

The chain is TPR repeat-containing protein MJ0940 from Methanocaldococcus jannaschii (strain ATCC 43067 / DSM 2661 / JAL-1 / JCM 10045 / NBRC 100440) (Methanococcus jannaschii).